The following is a 177-amino-acid chain: 2''-aminoglycoside nucleotidyltransferase (177 aa).

Residues 1 to 92 (MDTTQVTLIH…ELLDCEPAWW (92 aa)) are N-terminal domain. Residues D44, D46, and D86 each contribute to the Mg(2+) site. Catalysis depends on D86, which acts as the Proton acceptor. The interval 93–177 (ADEAYEIAEA…RAAFRSRYAA (85 aa)) is C-terminal domain. Position 100 (A100) interacts with kanamycin A.

Monomer. The cofactor is Mg(2+).

The catalysed reaction is nucleoside triphosphate + gentamicin = diphosphate + 2''-nucleotidylgentamicin.. Functionally, mediates bacterial resistance to kanamycin, gentamicin, dibekacin, sisomicin and tobramycin by adenylating the 2''-hydroxyl group of these antibiotics. The chain is 2''-aminoglycoside nucleotidyltransferase from Klebsiella pneumoniae.